Consider the following 502-residue polypeptide: ATP synthase subunit alpha (502 aa).

Residue 169–176 (GDRQTGKT) coordinates ATP.

This sequence belongs to the ATPase alpha/beta chains family. F-type ATPases have 2 components, CF(1) - the catalytic core - and CF(0) - the membrane proton channel. CF(1) has five subunits: alpha(3), beta(3), gamma(1), delta(1), epsilon(1). CF(0) has three main subunits: a(1), b(2) and c(9-12). The alpha and beta chains form an alternating ring which encloses part of the gamma chain. CF(1) is attached to CF(0) by a central stalk formed by the gamma and epsilon chains, while a peripheral stalk is formed by the delta and b chains.

It localises to the cell membrane. It carries out the reaction ATP + H2O + 4 H(+)(in) = ADP + phosphate + 5 H(+)(out). Produces ATP from ADP in the presence of a proton gradient across the membrane. The alpha chain is a regulatory subunit. The protein is ATP synthase subunit alpha of Desulfitobacterium hafniense (strain Y51).